We begin with the raw amino-acid sequence, 569 residues long: Anti-Muellerian hormone type-2 receptor (569 aa).

Positions 1–17 (MLGTLGLWALLPAAVQA) are cleaved as a signal peptide. Residues 18-148 (PPNRRTCVFF…AAPGESPWMA (131 aa)) lie on the Extracellular side of the membrane. Cystine bridges form between C55/C79 and C92/C109. The N-linked (GlcNAc...) asparagine glycan is linked to N66. N119 is a glycosylation site (N-linked (GlcNAc...) asparagine). The chain crosses the membrane as a helical span at residues 149–169 (LALLGLVLLLLLLLGGIVVAL). The Cytoplasmic segment spans residues 170-569 (LQRKAYRVQS…PGAACASSDV (400 aa)). In terms of domain architecture, Protein kinase spans 201-511 (LCFSQVIREG…RLVALVHPQE (311 aa)). ATP contacts are provided by residues 207-215 (IREGGHAAV) and K228. D331 functions as the Proton acceptor in the catalytic mechanism. Positions 512–535 (AQPCPEGRPHSHPEDWPPAPAPAP) are disordered.

This sequence belongs to the protein kinase superfamily. TKL Ser/Thr protein kinase family. TGFB receptor subfamily. As to quaternary structure, interacts with type I receptor ACVR1. The cofactor is Mg(2+). Requires Mn(2+) as cofactor.

Its subcellular location is the membrane. The catalysed reaction is L-threonyl-[receptor-protein] + ATP = O-phospho-L-threonyl-[receptor-protein] + ADP + H(+). It catalyses the reaction L-seryl-[receptor-protein] + ATP = O-phospho-L-seryl-[receptor-protein] + ADP + H(+). Functionally, on ligand binding, forms a receptor complex consisting of two type II and two type I transmembrane serine/threonine kinases. Type II receptors phosphorylate and activate type I receptors which autophosphorylate, then bind and activate SMAD transcriptional regulators. Receptor for anti-Muellerian hormone. The sequence is that of Anti-Muellerian hormone type-2 receptor (AMHR2) from Oryctolagus cuniculus (Rabbit).